We begin with the raw amino-acid sequence, 92 residues long: Putative protein pog (92 aa).

This Acute bee paralysis virus (strain Rothamsted) (ABPV) protein is Putative protein pog.